The chain runs to 790 residues: Polyribonucleotide nucleotidyltransferase (790 aa).

The Mg(2+) site is built by Asp-498 and Asp-504. One can recognise a KH domain in the interval 565–624; the sequence is PRILRIKIKPEQIGEVIGPGGRVIRAIQEQTGTKISIEEDGTVFISAANEDAARRAVREI. One can recognise an S1 motif domain in the interval 634–702; the sequence is GEIFYGRVVT…PDGKINLSRK (69 aa). The segment at 710 to 790 is disordered; it reads AERAATAQAP…KELLGEDEPN (81 aa). Residues 739–755 are compositionally biased toward basic and acidic residues; it reads PERRPGPPTPRRPEQRG. Over residues 757 to 772 the composition is skewed to pro residues; that stretch reads SRPPRPQAQRSTPPPG.

This sequence belongs to the polyribonucleotide nucleotidyltransferase family. Requires Mg(2+) as cofactor.

The protein localises to the cytoplasm. The enzyme catalyses RNA(n+1) + phosphate = RNA(n) + a ribonucleoside 5'-diphosphate. Its function is as follows. Involved in mRNA degradation. Catalyzes the phosphorolysis of single-stranded polyribonucleotides processively in the 3'- to 5'-direction. The polypeptide is Polyribonucleotide nucleotidyltransferase (Thermomicrobium roseum (strain ATCC 27502 / DSM 5159 / P-2)).